Here is a 483-residue protein sequence, read N- to C-terminus: Glycogen synthase (483 aa).

Residue K15 coordinates ADP-alpha-D-glucose.

It belongs to the glycosyltransferase 1 family. Bacterial/plant glycogen synthase subfamily.

The catalysed reaction is [(1-&gt;4)-alpha-D-glucosyl](n) + ADP-alpha-D-glucose = [(1-&gt;4)-alpha-D-glucosyl](n+1) + ADP + H(+). It participates in glycan biosynthesis; glycogen biosynthesis. In terms of biological role, synthesizes alpha-1,4-glucan chains using ADP-glucose. The polypeptide is Glycogen synthase (Exiguobacterium sibiricum (strain DSM 17290 / CCUG 55495 / CIP 109462 / JCM 13490 / 255-15)).